A 419-amino-acid chain; its full sequence is Glutamyl-tRNA reductase (419 aa).

Residues 49-52 (TCNR), serine 107, 112-114 (EPQ), and glutamine 118 each bind substrate. Cysteine 50 (nucleophile) is an active-site residue. An NADP(+)-binding site is contributed by 187 to 192 (GAGETI).

It belongs to the glutamyl-tRNA reductase family. In terms of assembly, homodimer.

The catalysed reaction is (S)-4-amino-5-oxopentanoate + tRNA(Glu) + NADP(+) = L-glutamyl-tRNA(Glu) + NADPH + H(+). It functions in the pathway porphyrin-containing compound metabolism; protoporphyrin-IX biosynthesis; 5-aminolevulinate from L-glutamyl-tRNA(Glu): step 1/2. Functionally, catalyzes the NADPH-dependent reduction of glutamyl-tRNA(Glu) to glutamate 1-semialdehyde (GSA). The sequence is that of Glutamyl-tRNA reductase from Vibrio cholerae serotype O1 (strain ATCC 39541 / Classical Ogawa 395 / O395).